The chain runs to 611 residues: Solute carrier family 23 member 3 (611 aa).

Over 1–52 (MSRSPLHPIPLLSEGYQDTPAPLPPLLPPLQNPSSRSWASRVFGPSTWGLSC) the chain is Cytoplasmic. Residues 53–73 (LLALQHFLVLASLLWASHLLL) traverse the membrane as a helical segment. Topologically, residues 74–88 (LHGLPPGGLSYPPAQ) are extracellular. The chain crosses the membrane as a helical span at residues 89–109 (LLASSFFSCGLSTVLQTWMGS). Over 110-168 (RLPLIQAPSLEFLIPALVLTNQKLPLTTKTPGNASLSLPLCSLTRSCHGLELWNTSLRE) the chain is Cytoplasmic. Residues 169–189 (VSGAVVVSGLLQGTIGLLGVP) form a helical membrane-spanning segment. The Extracellular segment spans residues 190-191 (GR). Residues 192–212 (VFPYCGPLVLAPSLVVAGLSA) form a helical membrane-spanning segment. Topologically, residues 213–215 (HKE) are cytoplasmic. Residues 216-236 (VAQFCSAHWGLALLLILLMVV) traverse the membrane as a helical segment. At 237–269 (CSQHLGSCQIPLCSWRPSSTSTHICIPVFRLLS) the chain is on the extracellular side. Residues 270-290 (VLAPVACVWFISAFVGTSVIP) traverse the membrane as a helical segment. The Cytoplasmic portion of the chain corresponds to 291–319 (LQLSEPSDAPWFWLPHPGEWEWPLLTPRA). The chain crosses the membrane as a helical span at residues 320–340 (LAAGISMALAASTSSLGCYAL). Residues 341-358 (CGQLLRLSPPPPHACSRG) are Extracellular-facing. Residues 359 to 379 (LSLEGLGSVLAGLLGSPLGTA) form a helical membrane-spanning segment. Residues 380–397 (SSFPNVGTVSLFQTGSRR) lie on the Cytoplasmic side of the membrane. Residues 398–417 (VAHLVGLFCMGLGLSPRLAQ) traverse the membrane as a helical segment. Residues 418–426 (LFTSIPLPV) lie on the Extracellular side of the membrane. Residues 427–449 (LGGVLGVTQAVVLSAGFSSFHLA) form a helical membrane-spanning segment. Topologically, residues 450–455 (DIDSGR) are cytoplasmic. Residues 456–475 (NVFIVGFSIFMALLLPRWLR) traverse the membrane as a helical segment. Topologically, residues 476–489 (EAPVLLNTGWSPLD) are extracellular. A helical transmembrane segment spans residues 490–510 (MFLRSLLAEPIFLAGLLGFLL). At 511–611 (ENTISGTRAE…TASREGVRSQ (101 aa)) the chain is on the cytoplasmic side. The segment at 574 to 611 (PEDSGDEGGSSKTGERADLLPNSGESYSTASREGVRSQ) is disordered. The span at 596-605 (SGESYSTASR) shows a compositional bias: polar residues.

Belongs to the nucleobase:cation symporter-2 (NCS2) (TC 2.A.40) family.

The protein localises to the membrane. The protein resides in the cytoplasm. It carries out the reaction hypoxanthine(out) + Na(+)(out) = hypoxanthine(in) + Na(+)(in). Its function is as follows. Acts as a sodium-dependent hypoxanthine transporter. May show xanthine-hypoxanthine exchange activity. This Mus musculus (Mouse) protein is Solute carrier family 23 member 3 (Slc23a3).